Reading from the N-terminus, the 1293-residue chain is MEMFASKSLQVEGLLFGVCSPEEILATSVVEVTKSCLKAETGSVYDPRMGSAGVDDDDALCPTCENTGRECPGHFGHIELAKPVVLFYKETVAWLKRCCHVCGTVGNEPRPFFFAPYSACNACGAQRPLVRLVDAHDPCAIRVTVRRKDGEPETMPPELILATLDRVRDSDVDRVLGRGKGSHVRFHPRRLVMTRMPVLPPCCRPNARQWPDGAMQDDNLSVFVSQIVKVNQRIKALEPDNPAVEGLVAQLRLKTLCFVDNTKGKVMHATNRKPMAGIKERIGKKGGLLRQNIMGKRRNQTGRSVVGPDGTLEVDEVGVPEAIADNLTVPVMVTPFNVSSLEAMMRDGRVSSVEMRDGTVHRPSEWRPSHGDHMETADGSPLGRVTRPSYDARDPSVVLRSWKTGETVTRPPPFSWPKLEPGMTVTRCLVDGDPVALNRQPTLHRNSMLGMRVKRLPGKTIRLNLSVTSGFNMDFDGDEGNLYLPQGPQARSETMLLMNPKSVIMSARGPHAEVSLVQDGVLGCHLMSLNSEIPCPPEELATCLMEVHGCEGWDVRDVEKGATPRDLLSSVLPSTLTVDCGGGCRIESGKIVSGHLTKSAVKKIVRAVCLENGGDAAGKLVDKLQFLTNAWLSHRPFSVGYSDCLTERPEETVRMVADAVCSKILEAEAADDEDGVSVALCGARDRGQAVTCAALTPDNRMAVMSRAQSKGDMFNLTQIAGLLGQQYVGGSRPGKEIDGGRRSLPHYPRVWDLEQTTLKYESRGFVRSSFLKGLNPREVFFHAKSGREGMISTSQMTGVTGYAERKMVKLNEDLVSAYDGTVRDAMGNVVQFVYGGHGMDPQRCWSDGCPVNFKTLAEECSSQECSSQISGLRSPAVTSVEEASLLVPVGLCPGAPDPVRESLFLKHASVILKGAEEHPCEDHSAWRERVARSYAAAVLCPGEAVGVLCAQSIGAKQTQQTLDTFHKAGVWLDDAGSVPFGELLGLSQKPMRRQCVVPLKVDPSTPGDEVRDLVGCSFVRRDLLDLLAVRPSTATVGKTASLELDPVKCFELRISPADVAYAVAEKFPPPHFDVSVSSFGVTLSWSVNYPVDNLFTGLFSVQVGGTPGVESYRLLRGRDGGWVAVTKGTNLGAFLCHPLADWERVRTDDVWDVYETLGLAAAKKRLYELMFSCVGDNLYPAHIKLLTDRMMRRGRPTPIDRYTMRTCEVGPLSRAAFEESLDILTGAGCTAETEHCAGAGARVAAGLPVRAGTGYMGLLCGKGFFDEPVVKVPDADGREYVDYSYSDDESFEW.

The Zn(2+) site is built by C61, C64, C71, H74, C99, C102, and C123. A DNA-binding region spans residues 270 to 339; that stretch reads TNRKPMAGIK…PVMVTPFNVS (70 aa). Residues 354–376 show a composition bias toward basic and acidic residues; that stretch reads EMRDGTVHRPSEWRPSHGDHMET. The segment at 354 to 390 is disordered; it reads EMRDGTVHRPSEWRPSHGDHMETADGSPLGRVTRPSY. D474, D476, and D478 together coordinate Mg(2+). The alpha-amanitin binding stretch occupies residues 724 to 734; the sequence is GQQYVGGSRPG. Residues 776 to 788 are bridging helix; the sequence is PREVFFHAKSGRE.

This sequence belongs to the RNA polymerase beta' chain family.

It carries out the reaction RNA(n) + a ribonucleoside 5'-triphosphate = RNA(n+1) + diphosphate. In terms of biological role, component of the DNA-dependent RNA polymerase that catalyzes the transcription of DNA into RNA using the four ribonucleoside triphosphates as substrates. Largest and catalytic component of RNA polymerase II which synthesizes mRNA precursors and many functional non-coding RNAs. Forms the polymerase active center together with the second largest subunit. This Frog virus 3 (isolate Goorha) (FV-3) protein is Putative DNA-directed RNA polymerase 008R.